Here is a 405-residue protein sequence, read N- to C-terminus: Opine dehydrogenase (405 aa).

It belongs to the lysopine/nopaline/octopine/opine/vitopine dehydrogenases family.

This chain is Opine dehydrogenase, found in Haliotis discus hannai (Japanese abalone).